Consider the following 136-residue polypeptide: ATP synthase epsilon chain (136 aa).

Belongs to the ATPase epsilon chain family. In terms of assembly, F-type ATPases have 2 components, CF(1) - the catalytic core - and CF(0) - the membrane proton channel. CF(1) has five subunits: alpha(3), beta(3), gamma(1), delta(1), epsilon(1). CF(0) has three main subunits: a, b and c.

The protein localises to the cell inner membrane. In terms of biological role, produces ATP from ADP in the presence of a proton gradient across the membrane. The chain is ATP synthase epsilon chain from Afipia carboxidovorans (strain ATCC 49405 / DSM 1227 / KCTC 32145 / OM5) (Oligotropha carboxidovorans).